The chain runs to 169 residues: Der GTPase-activating protein YihI (169 aa).

Disordered stretches follow at residues 1 to 100 (MKPS…AELE) and 144 to 169 (GLSY…LRGN). Basic residues predominate over residues 10–19 (SKGHAKARRK). Positions 20 to 30 (TREELDQEARD) are enriched in basic and acidic residues. The span at 31-40 (RKRQKKRRGH) shows a compositional bias: basic residues. Residues 49-58 (GNTSSGSKGQ) show a composition bias toward polar residues. A compositionally biased stretch (acidic residues) spans 147–159 (YDDDEEEEEDEKQ). The span at 160–169 (EDMMRLLRGN) shows a compositional bias: basic and acidic residues.

It belongs to the YihI family. As to quaternary structure, interacts with Der.

A GTPase-activating protein (GAP) that modifies Der/EngA GTPase function. May play a role in ribosome biogenesis. The chain is Der GTPase-activating protein YihI from Escherichia coli (strain SMS-3-5 / SECEC).